Reading from the N-terminus, the 127-residue chain is Holo-[acyl-carrier-protein] synthase (127 aa).

The Mg(2+) site is built by Asp7 and Glu56.

The protein belongs to the P-Pant transferase superfamily. AcpS family. Mg(2+) is required as a cofactor.

It is found in the cytoplasm. It carries out the reaction apo-[ACP] + CoA = holo-[ACP] + adenosine 3',5'-bisphosphate + H(+). In terms of biological role, transfers the 4'-phosphopantetheine moiety from coenzyme A to a Ser of acyl-carrier-protein. This chain is Holo-[acyl-carrier-protein] synthase, found in Onion yellows phytoplasma (strain OY-M).